The primary structure comprises 282 residues: ADP-ribosyl cyclase/cyclic ADP-ribose hydrolase (282 aa).

A signal peptide spans 1–24 (MSPVAIIACVCLAVTLTSISPSEA). Disulfide bonds link C39–C58, C75–C155, C136–C149, C230–C251, and C263–C272.

This sequence belongs to the ADP-ribosyl cyclase family. Has different isoforms which may be the result of different amounts of phosphorylation. In terms of tissue distribution, immature occoyctes. Oocytes.

It is found in the cytoplasmic vesicle. The catalysed reaction is NAD(+) = cyclic ADP-beta-D-ribose + nicotinamide + H(+). It catalyses the reaction nicotinate + NADP(+) = nicotinate-adenine dinucleotide phosphate + nicotinamide. The enzyme catalyses 2'-phospho-cyclic ADP-ribose + nicotinate = nicotinate-adenine dinucleotide phosphate. With respect to regulation, activity is presumably regulated by its sequestration in vesicles before egg fertilization. After fertilization and upon NADase release, it could then be regulated via its potential phosphorylation sites. In terms of biological role, synthesizes cyclic ADP-ribose (cADPR), a second messenger for calcium mobilization from endoplasmic reticulum; ADP-ribose is a minor product. Synthesizes the Ca(2+) mobilizer nicotinate-adenine dinucleotide phosphate from 2'-phospho-cADPR and nicotinic acid as well as from NADP(+) and nicotinic acid; with NADP(+) as substrate preferentially catalyzes NADP(+) hydrolysis rather than NAADP(+) synthesis, about 70-fold better at pH 7.4. Has cADPR hydrolase activity at very high enzyme concentrations, which is probably not physiological. The conversion of NAD(+) into ADP-ribose is also only observed at high enzyme concentrations and results from the hydrolysis of cADP-ribose. The protein is ADP-ribosyl cyclase/cyclic ADP-ribose hydrolase of Aplysia californica (California sea hare).